We begin with the raw amino-acid sequence, 392 residues long: Cell division protein FtsZ (392 aa).

GTP-binding positions include 24 to 28 (GGGCN), 111 to 113 (GTG), Glu-142, Arg-145, and Asp-189.

Belongs to the FtsZ family. Homodimer. Polymerizes to form a dynamic ring structure in a strictly GTP-dependent manner. Interacts directly with several other division proteins.

The protein localises to the cytoplasm. Functionally, essential cell division protein that forms a contractile ring structure (Z ring) at the future cell division site. The regulation of the ring assembly controls the timing and the location of cell division. One of the functions of the FtsZ ring is to recruit other cell division proteins to the septum to produce a new cell wall between the dividing cells. Binds GTP and shows GTPase activity. The sequence is that of Cell division protein FtsZ from Neisseria meningitidis serogroup A / serotype 4A (strain DSM 15465 / Z2491).